We begin with the raw amino-acid sequence, 535 residues long: Probable bifunctional tRNA threonylcarbamoyladenosine biosynthesis protein (535 aa).

Residues 1–323 (MICLGLEGTA…YRTDMVEVNW (323 aa)) are kae1. Residues His106, His110, and Tyr127 each coordinate Fe cation. Residues 127 to 131 (YVSGG), Asp159, Gly172, Glu176, and Asn256 contribute to the L-threonylcarbamoyladenylate site. Residue Asp284 coordinates Fe cation. Residues 333–535 (KIPEHLIGKG…DVERRARYVE (203 aa)) enclose the Protein kinase domain. Residues 339 to 347 (IGKGAEADI) and Lys360 contribute to the ATP site. Asp451 functions as the Proton acceptor; for kinase activity in the catalytic mechanism.

This sequence in the N-terminal section; belongs to the KAE1 / TsaD family. It in the C-terminal section; belongs to the protein kinase superfamily. Tyr protein kinase family. BUD32 subfamily. In terms of assembly, component of the KEOPS complex that consists of Kae1, Bud32, Cgi121 and Pcc1; the whole complex dimerizes. Requires Fe(2+) as cofactor.

The protein resides in the cytoplasm. The enzyme catalyses L-seryl-[protein] + ATP = O-phospho-L-seryl-[protein] + ADP + H(+). It catalyses the reaction L-threonyl-[protein] + ATP = O-phospho-L-threonyl-[protein] + ADP + H(+). The catalysed reaction is L-threonylcarbamoyladenylate + adenosine(37) in tRNA = N(6)-L-threonylcarbamoyladenosine(37) in tRNA + AMP + H(+). Its activity is regulated as follows. Activity provided by the Kae1 region seems to be regulated via phosphorylation by the protein kinase Bud32, which is itself activated by Cgi121. In terms of biological role, required for the formation of a threonylcarbamoyl group on adenosine at position 37 (t(6)A37) in tRNAs that read codons beginning with adenine. Is a component of the KEOPS complex that is probably involved in the transfer of the threonylcarbamoyl moiety of threonylcarbamoyl-AMP (TC-AMP) to the N6 group of A37. The Kae1 domain likely plays a direct catalytic role in this reaction. The Bud32 domain probably displays kinase activity that regulates Kae1 function. In vitro, exhibits low ATPase activity, but does not bind DNA and does not have endonuclease activity. This is Probable bifunctional tRNA threonylcarbamoyladenosine biosynthesis protein from Methanocaldococcus jannaschii (strain ATCC 43067 / DSM 2661 / JAL-1 / JCM 10045 / NBRC 100440) (Methanococcus jannaschii).